Here is a 123-residue protein sequence, read N- to C-terminus: uncharacterized protein (123 aa).

Residues 100-123 (NKQPKTTHHFSTNSSEYKSRKSKH) form a disordered region.

This is an uncharacterized protein from Acanthamoeba polyphaga mimivirus (APMV).